The sequence spans 424 residues: Bone morphogenetic protein 10 (424 aa).

A signal peptide spans 1–21; the sequence is MGSLVLTLCALFCLAAYLVSG. A propeptide spanning residues 22–316 is cleaved from the precursor; sequence SPIMNLEQSP…IYDSTARIRR (295 aa). 2 N-linked (GlcNAc...) asparagine glycosylation sites follow: Asn67 and Asn131. 3 disulfide bridges follow: Cys323–Cys389, Cys352–Cys421, and Cys356–Cys423.

Belongs to the TGF-beta family. Homodimer; disulfide-linked. Interacts with FBN1 (via N-terminal domain) and FBN2. Interacts with ENG. Detected in mammary epithelia (at protein level).

Its subcellular location is the secreted. Functionally, required for maintaining the proliferative activity of embryonic cardiomyocytes by preventing premature activation of the negative cell cycle regulator CDKN1C/p57KIP and maintaining the required expression levels of cardiogenic factors such as MEF2C and NKX2-5. Acts as a ligand for ACVRL1/ALK1, BMPR1A/ALK3 and BMPR1B/ALK6, leading to activation of SMAD1, SMAD5 and SMAD8 transcription factors. Inhibits endothelial cell migration and growth. May reduce cell migration and cell matrix adhesion in breast cancer cell lines. This Homo sapiens (Human) protein is Bone morphogenetic protein 10 (BMP10).